The following is a 130-amino-acid chain: Small ribosomal subunit protein uS8 (130 aa).

This sequence belongs to the universal ribosomal protein uS8 family. In terms of assembly, part of the 30S ribosomal subunit. Contacts proteins S5 and S12.

Its function is as follows. One of the primary rRNA binding proteins, it binds directly to 16S rRNA central domain where it helps coordinate assembly of the platform of the 30S subunit. The sequence is that of Small ribosomal subunit protein uS8 from Shewanella baltica (strain OS223).